The following is a 283-amino-acid chain: Probable endonuclease 4 (283 aa).

Zn(2+) contacts are provided by His69, His109, Glu145, Asp179, His182, His216, Asp229, His231, and Glu261.

Belongs to the AP endonuclease 2 family. Zn(2+) serves as cofactor.

It catalyses the reaction Endonucleolytic cleavage to 5'-phosphooligonucleotide end-products.. Functionally, endonuclease IV plays a role in DNA repair. It cleaves phosphodiester bonds at apurinic or apyrimidinic (AP) sites, generating a 3'-hydroxyl group and a 5'-terminal sugar phosphate. This Campylobacter concisus (strain 13826) protein is Probable endonuclease 4.